We begin with the raw amino-acid sequence, 572 residues long: MRRKRDSYDYVIIGGGSAGSVLGARLSEDKDKNVLVLEAGRSDYFWDLFIQMPAALMFPSGNRFYDWEYQTDEEPHMGRRVDHARGKVLGGSSSINGMIYQRGNPMDYEGWAEPEGMDTWDFAHCLPYFKKLETTYGAAPYDKVRGHDGPIKLKRGPATNPLFKSFFNAGVEAGYHKTADVNGYRQEGFGPFDSQVHHGRRMSASRAYLRPALRRRNLDVETRAFVTKLIFDENNSKKVTGVTFKKNGKEHTVHANEVILSGGAFNTPQLLQLSGIGDSEFLKSKGIEPRMHLPGVGENFEDHLEVYIQHKCKQPVSLQPSLDVKRMPFIGLQWIFARKGAAASNHFEGGGFVRSNDDVDYPNLMFHFLPIAVRYDGQKAPVAHGYQVHVGPMYSNSRGSLKIKSKDPFEKPSIVFNYLSTKEDEREWVEAIRVARNILKQKAMDPFNGGEISPGPQVQTDEEILDWVRKDGETALHPSCSAKMGPASDPMAVVDPLTMKVHGMENLRVVDASAMPRTTNGNIHAPVLMLAEKAADIIRGRKPLEPQYVDYYKHGIDDEKAGAMEDDPFYQY.

Aspartate 9–glutamate 38 is a binding site for FAD. Histidine 477 serves as the catalytic Proton acceptor.

This sequence belongs to the GMC oxidoreductase family. Requires FAD as cofactor.

It carries out the reaction choline + A = betaine aldehyde + AH2. The enzyme catalyses betaine aldehyde + NAD(+) + H2O = glycine betaine + NADH + 2 H(+). It participates in amine and polyamine biosynthesis; betaine biosynthesis via choline pathway; betaine aldehyde from choline (cytochrome c reductase route): step 1/1. Involved in the biosynthesis of the osmoprotectant glycine betaine. Catalyzes the oxidation of choline to betaine aldehyde and betaine aldehyde to glycine betaine at the same rate. The polypeptide is Oxygen-dependent choline dehydrogenase (Staphylococcus epidermidis (strain ATCC 12228 / FDA PCI 1200)).